The sequence spans 209 residues: TVP38/TMEM64 family membrane protein slr0305 (209 aa).

The next 5 helical transmembrane spans lie at 15–35 (LGTW…VVFL), 39–59 (ILTL…YVFI), 110–130 (LSPV…NVSL), 134–154 (VIGS…GSLA), and 171–191 (LQWT…IYVT).

Belongs to the TVP38/TMEM64 family.

Its subcellular location is the cell membrane. In Synechocystis sp. (strain ATCC 27184 / PCC 6803 / Kazusa), this protein is TVP38/TMEM64 family membrane protein slr0305.